The sequence spans 298 residues: Foldase protein PrsA 1 (298 aa).

Residues 1 to 23 (MNKTWKKAATVLAFAGIALSATA) form the signal peptide. Cys24 carries N-palmitoyl cysteine lipidation. Cys24 carries S-diacylglycerol cysteine lipidation. The region spanning 141 to 234 (QPEVTVQHIL…YGYHVIKMIK (94 aa)) is the PpiC domain.

It belongs to the PrsA family.

The protein localises to the cell membrane. The enzyme catalyses [protein]-peptidylproline (omega=180) = [protein]-peptidylproline (omega=0). Functionally, plays a major role in protein secretion by helping the post-translocational extracellular folding of several secreted proteins. This Lactobacillus johnsonii (strain CNCM I-12250 / La1 / NCC 533) protein is Foldase protein PrsA 1 (prsA1).